Here is a 675-residue protein sequence, read N- to C-terminus: PTS system glucose-specific EIICBA component (675 aa).

In terms of domain architecture, PTS EIIC type-1 spans 3-414; it reads KKLFGQMQRI…FNYKTPGRED (412 aa). 11 consecutive transmembrane segments (helical) span residues 16 to 36, 59 to 79, 81 to 101, 126 to 146, 170 to 190, 211 to 231, 273 to 293, 303 to 323, 328 to 348, 355 to 375, and 378 to 398; these read LMLP…GTAF, MLTG…ALGV, IGLA…FIIL, VLGI…GALA, FVPI…AIIW, LAVF…LHHI, FMQG…LAIY, VVAG…ITEP, FLFV…LSFL, VHLG…GILP, and TAWW…YFVF. The 82-residue stretch at 425-506 folds into the PTS EIIB type-1 domain; sequence SQLPFDVLKA…AKIISGEITK (82 aa). Cysteine 447 serves as the catalytic Phosphocysteine intermediate; for EIIB activity. One can recognise a PTS EIIA type-1 domain in the interval 547–651; it reads DKVFSEKMMG…SIITPVIITN (105 aa). Histidine 599 serves as the catalytic Tele-phosphohistidine intermediate; for EIIA activity.

It is found in the cell membrane. It carries out the reaction N(pros)-phospho-L-histidyl-[protein] + D-glucose(out) = D-glucose 6-phosphate(in) + L-histidyl-[protein]. In terms of biological role, the phosphoenolpyruvate-dependent sugar phosphotransferase system (sugar PTS), a major carbohydrate active transport system, catalyzes the phosphorylation of incoming sugar substrates concomitantly with their translocation across the cell membrane. This system is involved in glucose transport. This Staphylococcus epidermidis protein is PTS system glucose-specific EIICBA component (ptsG).